We begin with the raw amino-acid sequence, 265 residues long: Undecaprenyl-diphosphatase (265 aa).

8 consecutive transmembrane segments (helical) span residues 1–21 (MDIFQALFLGLLQGLTEFLPI), 39–59 (QGVGFDLSVHVGTLLAVVLYF), 84–104 (ALAWYLVIGTIPAGLAGLALL), 114–134 (ASVIFFTTLVFGILLGIADWL), 144–164 (LNWKDAVIVGIAQAMALVPGT), 187–207 (FSFLLAIPIIVLASAVKLLEV), 218–238 (GFLIGGVTSFLMAITAIHFFL), and 244–264 (VGMWPYVIYRIILAGVIYAVL).

Belongs to the UppP family.

The protein localises to the cell inner membrane. The enzyme catalyses di-trans,octa-cis-undecaprenyl diphosphate + H2O = di-trans,octa-cis-undecaprenyl phosphate + phosphate + H(+). In terms of biological role, catalyzes the dephosphorylation of undecaprenyl diphosphate (UPP). Confers resistance to bacitracin. This chain is Undecaprenyl-diphosphatase, found in Marinobacter nauticus (strain ATCC 700491 / DSM 11845 / VT8) (Marinobacter aquaeolei).